The primary structure comprises 82 residues: Ranatensin (82 aa).

The signal sequence occupies residues 1–27 (MTTIPAIGILPIDFLTILLLFSFISHS). A propeptide spanning residues 28-47 (VCVEFAEDAGELDKSNAFRR) is cleaved from the precursor. M58 carries the post-translational modification Methionine amide. Residues 62-82 (SLSDDTEQATMYSSRFVESTS) constitute a propeptide that is removed on maturation.

This sequence belongs to the bombesin/neuromedin-B/ranatensin family. In terms of tissue distribution, expressed by the skin glands.

The protein localises to the secreted. This chain is Ranatensin, found in Lithobates pipiens (Northern leopard frog).